A 246-amino-acid chain; its full sequence is Probable transcriptional regulatory protein HSM_1763 (246 aa).

It belongs to the TACO1 family.

It is found in the cytoplasm. The protein is Probable transcriptional regulatory protein HSM_1763 of Histophilus somni (strain 2336) (Haemophilus somnus).